An 84-amino-acid polypeptide reads, in one-letter code: Cytochrome b559 subunit alpha (84 aa).

Topologically, residues 2-20 (AGTTGERPFSDIITSVRYW) are cytoplasmic. A helical membrane pass occupies residues 21 to 35 (VIHSITIPALFIAGW). Residue histidine 23 participates in heme binding. Residues 36–84 (LFVSTGLAYDVFGTPRPDSYYAQEQRSIPLVTDRFEAKQQVETFLEQLK) are Lumenal-facing.

Belongs to the PsbE/PsbF family. As to quaternary structure, heterodimer of an alpha subunit and a beta subunit. PSII is composed of 1 copy each of membrane proteins PsbA, PsbB, PsbC, PsbD, PsbE, PsbF, PsbH, PsbI, PsbJ, PsbK, PsbL, PsbM, PsbT, PsbX, PsbY, PsbZ, Psb30/Ycf12, peripheral proteins PsbO, CyanoQ (PsbQ), PsbU, PsbV and a large number of cofactors. It forms dimeric complexes. Heme b serves as cofactor.

Its subcellular location is the cellular thylakoid membrane. Its function is as follows. This b-type cytochrome is tightly associated with the reaction center of photosystem II (PSII). PSII is a light-driven water:plastoquinone oxidoreductase that uses light energy to abstract electrons from H(2)O, generating O(2) and a proton gradient subsequently used for ATP formation. It consists of a core antenna complex that captures photons, and an electron transfer chain that converts photonic excitation into a charge separation. The protein is Cytochrome b559 subunit alpha of Thermostichus vulcanus (Synechococcus vulcanus).